The primary structure comprises 189 residues: Interferon alpha-17 (189 aa).

The signal sequence occupies residues 1 to 23 (MALSFSLLMAVLVLSYKSICSLG). Intrachain disulfides connect cysteine 24–cysteine 122 and cysteine 52–cysteine 162.

Belongs to the alpha/beta interferon family.

Its subcellular location is the secreted. Produced by macrophages, IFN-alpha have antiviral activities. Interferon stimulates the production of two enzymes: a protein kinase and an oligoadenylate synthetase. The chain is Interferon alpha-17 (IFNA17) from Homo sapiens (Human).